Reading from the N-terminus, the 238-residue chain is Fatty acid metabolism regulator protein (238 aa).

The HTH gntR-type domain occupies 6 to 74 (KGPASFAEKY…HGKPTRVNNF (69 aa)). The H-T-H motif DNA-binding region spans 34 to 53 (ERELSELIGVTRTTLREVLQ).

In terms of assembly, homodimer.

The protein localises to the cytoplasm. Functionally, multifunctional regulator of fatty acid metabolism. This chain is Fatty acid metabolism regulator protein, found in Shewanella baltica (strain OS223).